Consider the following 857-residue polypeptide: DNA mismatch repair protein MutS (857 aa).

608–615 (GPNMSGKS) serves as a coordination point for ATP.

Belongs to the DNA mismatch repair MutS family.

Functionally, this protein is involved in the repair of mismatches in DNA. It is possible that it carries out the mismatch recognition step. This protein has a weak ATPase activity. The polypeptide is DNA mismatch repair protein MutS (Lactobacillus gasseri (strain ATCC 33323 / DSM 20243 / BCRC 14619 / CIP 102991 / JCM 1131 / KCTC 3163 / NCIMB 11718 / NCTC 13722 / AM63)).